The chain runs to 251 residues: MLGEKSDFTIHPINVLQDNIVWVWVHNCNAVVVDPSISGPVEKWLLEKNLSLKAILQTHHHDDHIGGTQKLIKTWPEAKVVASKKEHKRIPFQTFSVDDNDIFNLMDAEIKVIEVHGHTDNHIAFYISKQNAKCNILFPGDTLFGGGCGRLLEGSPVQMFESLYKLNSLPENTEIYPAHEYTESNLKWALSLEPGNISIIERLKLIQKKLQKGMSSLPSTLSEERKTNLFLIAENVEKFTMLRKHKDRWKC.

Zn(2+) is bound by residues H59, H61, D63, H64, H118, D141, and H179.

This sequence belongs to the metallo-beta-lactamase superfamily. Glyoxalase II family. In terms of assembly, monomer. The cofactor is Zn(2+).

It carries out the reaction an S-(2-hydroxyacyl)glutathione + H2O = a 2-hydroxy carboxylate + glutathione + H(+). The protein operates within secondary metabolite metabolism; methylglyoxal degradation; (R)-lactate from methylglyoxal: step 2/2. In terms of biological role, thiolesterase that catalyzes the hydrolysis of S-D-lactoyl-glutathione to form glutathione and D-lactic acid. This is Hydroxyacylglutathione hydrolase from Prochlorococcus marinus (strain NATL1A).